A 121-amino-acid chain; its full sequence is Pro-glucagon (121 aa).

The first 21 residues, 1-21 (MKGAQYLAGLLLLLFVQNSIC), serve as a signal peptide directing secretion. Positions 80–85 (SNGGSA) are excised as a propeptide.

The protein belongs to the glucagon family.

The protein resides in the secreted. Its function is as follows. Plays a key role in glucose metabolism and homeostasis. Regulates blood glucose by increasing gluconeogenesis and decreasing glycolysis. The protein is Pro-glucagon (gcg) of Carassius auratus (Goldfish).